The sequence spans 46 residues: Apamin (46 aa).

The first 27 residues, 1–27 (MISMLRCIYLFLSVILITSYFVTPVMP), serve as a signal peptide directing secretion. Cystine bridges form between Cys28–Cys38 and Cys30–Cys42. The tract at residues 40–41 (RR) is essential for toxin activity. A Histidine amide modification is found at His45.

Expressed by the venom gland.

The protein localises to the secreted. Toxin with unique selectivity to KCa2 channels. Potently blocks human, rat and mouse KCa2.2/KCNN2/SK2 channels (IC(50)=27-140 pM), and moderately blocks human and rat KCa2.3/KCNN3/SK3 channels (IC(50)=0.6-4 nM), and human (IC(50)=0.7-12 nM) and mouse (IC(50)=28 nM) KCa2.1/KCNN1/SK1 channels. Does not show any antimicrobial activity. In vivo, intracerebroventricular injection into rats of a dose of 1 ng results in neurodegeneration specifically in the Purkinje cells of the cerebellum, and induces seizures characterized by hypersensitivity to noise, loss of postural control, paroxystic jerking, and alternating periods of great agitation with tonic-clonic convulsions and periods of total prostration. When administered at high doses, exerts anti-inflammatory, anti-oxidative, anti-fibrotic and anti-apoptotic properties in several models of inflammatory disease, including gouty arthritis, atherosclerosis, atopic dermatitis and acute kidney injury. Down-regulates pro-inflammatory signaling pathways, such as the NF-kappaB and STAT3 pathways, probably by blocking SK channels such as KCa2.2/KCNN2/SK2 and/or KCa2.3/KCNN3/SK3 which are thought to be involved in promoting some inflammatory responses. For example in mouse and rat microglia cells, inhibits LPS-activated KCa2.2/KCNN2/SK2 channels and TLR4 expression leading to the down-regulation of the NF-kappaB, STAT, and MAPK/ERK signaling pathways and, as a consequence, decreases secretion of pro-inflammatory cytokines. The protein is Apamin of Apis mellifera (Honeybee).